Here is a 574-residue protein sequence, read N- to C-terminus: Streptolysin O (574 aa).

An N-terminal signal peptide occupies residues 1-36; sequence MKDMSNKKIFKKYSRVAGLLTAALIVGNLVTANADS. Low complexity predominate over residues 37-52; it reads NKQNTANTETTTTNEQ. 2 disordered regions span residues 37 to 64 and 84 to 111; these read NKQNTANTETTTTNEQPKPESSELTTEK and KEMPLESAEKEEKKSEDNKKSEEDHTEE. The segment covering 53 to 64 has biased composition (basic and acidic residues); it reads PKPESSELTTEK. A run of 4 beta stranded transmembrane segments spans residues 263–276, 283–292, 361–370, and 378–390; these read KSQIEAALNVNSKI, IDFKSISKGE, SNDVEAAFSA, and KTNGKYSDILENS. The short motif at 532 to 542 is the Conserved undecapeptide element; the sequence is ECTGLAWEWWR. A Cholesterol binding motif is present at residues 564-565; the sequence is TL.

Belongs to the cholesterol-dependent cytolysin family. Homooligomeric pore complex of 35 to 50 subunits; when inserted in the host membrane.

Its subcellular location is the secreted. It is found in the host cell membrane. In terms of biological role, a cholesterol-dependent toxin that causes cytolysis by forming pores in cholesterol containing host membranes. After binding to target membranes, the protein undergoes a major conformation change, leading to its insertion in the host membrane and formation of an oligomeric pore complex. Cholesterol is required for binding to host membranes, membrane insertion and pore formation; cholesterol binding is mediated by a Thr-Leu pair in the C-terminus. Can be reversibly inactivated by oxidation. The polypeptide is Streptolysin O (slo) (Streptococcus canis).